The following is a 431-amino-acid chain: C4-dicarboxylate transport protein (431 aa).

The next 8 membrane-spanning stretches (helical) occupy residues isoleucine 8–proline 28, leucine 44–methionine 64, leucine 78–leucine 98, glycine 148–glycine 168, isoleucine 188–isoleucine 208, leucine 222–alanine 242, isoleucine 307–leucine 327, and alanine 355–isoleucine 375.

It belongs to the dicarboxylate/amino acid:cation symporter (DAACS) (TC 2.A.23) family.

Its subcellular location is the cell inner membrane. Functionally, responsible for the transport of dicarboxylates such as succinate, fumarate, and malate from the periplasm across the membrane. The polypeptide is C4-dicarboxylate transport protein (Cupriavidus pinatubonensis (strain JMP 134 / LMG 1197) (Cupriavidus necator (strain JMP 134))).